The chain runs to 296 residues: tRNA dimethylallyltransferase (296 aa).

Residue 10–17 participates in ATP binding; that stretch reads GPTASGKT. A substrate-binding site is contributed by 12–17; that stretch reads TASGKT. The segment at 35–38 is interaction with substrate tRNA; it reads DSRQ.

Belongs to the IPP transferase family. Monomer. The cofactor is Mg(2+).

The enzyme catalyses adenosine(37) in tRNA + dimethylallyl diphosphate = N(6)-dimethylallyladenosine(37) in tRNA + diphosphate. In terms of biological role, catalyzes the transfer of a dimethylallyl group onto the adenine at position 37 in tRNAs that read codons beginning with uridine, leading to the formation of N6-(dimethylallyl)adenosine (i(6)A). This Synechococcus sp. (strain RCC307) protein is tRNA dimethylallyltransferase.